We begin with the raw amino-acid sequence, 257 residues long: Imidazole glycerol phosphate synthase subunit hisF1 (257 aa).

Active-site residues include Asp-11 and Asp-130.

Belongs to the HisA/HisF family. In terms of assembly, heterodimer of HisH and HisF.

It localises to the cytoplasm. It catalyses the reaction 5-[(5-phospho-1-deoxy-D-ribulos-1-ylimino)methylamino]-1-(5-phospho-beta-D-ribosyl)imidazole-4-carboxamide + L-glutamine = D-erythro-1-(imidazol-4-yl)glycerol 3-phosphate + 5-amino-1-(5-phospho-beta-D-ribosyl)imidazole-4-carboxamide + L-glutamate + H(+). The protein operates within amino-acid biosynthesis; L-histidine biosynthesis; L-histidine from 5-phospho-alpha-D-ribose 1-diphosphate: step 5/9. Functionally, IGPS catalyzes the conversion of PRFAR and glutamine to IGP, AICAR and glutamate. The HisF subunit catalyzes the cyclization activity that produces IGP and AICAR from PRFAR using the ammonia provided by the HisH subunit. In Vibrio vulnificus (strain YJ016), this protein is Imidazole glycerol phosphate synthase subunit hisF1 (hisF1).